A 1706-amino-acid polypeptide reads, in one-letter code: DDT domain-containing protein PTM (1706 aa).

Positions 1–16 are enriched in basic residues; sequence MEAKVPRPRGRPRKRQ. Disordered stretches follow at residues 1–27 and 144–168; these read MEAK…KLNN and VTNS…RGSD. The short motif at 9-18 is the Nuclear localization signal element; that stretch reads RGRPRKRQRL. A compositionally biased stretch (acidic residues) spans 148-160; it reads EDGDSYSDSESSE. The DDT domain maps to 192-252; it reads EEAVAHLLSV…LRALKGHLER (61 aa). The segment covering 375 to 393 has biased composition (basic and acidic residues); that stretch reads YKEKEVTDSSTNESKDLDS. The tract at residues 375–408 is disordered; it reads YKEKEVTDSSTNESKDLDSRCTNGGSNEVSSDLD. Residues 394 to 408 are compositionally biased toward polar residues; that stretch reads RCTNGGSNEVSSDLD. The PHD-type 1 zinc-finger motif lies at 411 to 458; it reads SDECRICGMDGTLLCCDGCPLAYHSRCIGVVKMYIPDGPWFCPECTIN. 2 disordered regions span residues 1165 to 1194 and 1311 to 1345; these read KPPS…SVSK and TNQK…PATP. Composition is skewed to polar residues over residues 1167-1194 and 1311-1323; these read PSQQ…SVSK and TNQK…SGLD. Residues 1325–1336 are compositionally biased toward basic and acidic residues; the sequence is DSERMSEQKDSK. Helical transmembrane passes span 1539–1559, 1569–1589, 1596–1616, 1624–1644, and 1682–1702; these read ALGS…SILP, LAGP…GLFL, ANDL…LGLI, AALH…WCGL, and MLGL…YVLI.

In terms of assembly, interacts (via the DDT domain) with CHR11 (via C-terminus).

Its subcellular location is the plastid. The protein localises to the chloroplast outer membrane. It localises to the nucleus. Membrane-bound transcription factor required for the plastid-to-nucleus retrograde signaling. Functions in multiple retrograde pathways. The plastid-to-nucleus signal plays an important role in the coordinated expression of both nuclear- and chloroplast-localized genes that encode photosynthesis-related proteins. In the nucleus, activates ABI4 transcription in a PHD-dependent manner associated with histone modifications. Localized primarily in the chloroplast outer membrane as dormant form and, in response to retrograde signals, is released from the membrane through proteolytic cleavage and its cleaved fragment containing the transcription factor domain is redistributed to the nucleus, where it regulates the expression of particular nuclear genes. This is DDT domain-containing protein PTM from Arabidopsis thaliana (Mouse-ear cress).